We begin with the raw amino-acid sequence, 359 residues long: Holliday junction branch migration complex subunit RuvB (359 aa).

The span at 1-10 (MPEHDPHQEN) shows a compositional bias: basic and acidic residues. Residues 1–20 (MPEHDPHQENRTVSSVRLED) are disordered. The large ATPase domain (RuvB-L) stretch occupies residues 4 to 188 (HDPHQENRTV…FGIPLRLIFY (185 aa)). Residues Leu27, Arg28, Gly69, Lys72, Thr73, Thr74, 135-137 (EDF), Arg178, Tyr188, and Arg225 each bind ATP. Position 73 (Thr73) interacts with Mg(2+). The tract at residues 189-259 (TASELELIVS…TADAALQRLE (71 aa)) is small ATPAse domain (RuvB-S). The tract at residues 262–359 (SLGLDAMDRR…LLHRDGSADE (98 aa)) is head domain (RuvB-H). Positions 298, 317, and 322 each coordinate DNA.

The protein belongs to the RuvB family. In terms of assembly, homohexamer. Forms an RuvA(8)-RuvB(12)-Holliday junction (HJ) complex. HJ DNA is sandwiched between 2 RuvA tetramers; dsDNA enters through RuvA and exits via RuvB. An RuvB hexamer assembles on each DNA strand where it exits the tetramer. Each RuvB hexamer is contacted by two RuvA subunits (via domain III) on 2 adjacent RuvB subunits; this complex drives branch migration. In the full resolvosome a probable DNA-RuvA(4)-RuvB(12)-RuvC(2) complex forms which resolves the HJ.

The protein localises to the cytoplasm. It catalyses the reaction ATP + H2O = ADP + phosphate + H(+). Its function is as follows. The RuvA-RuvB-RuvC complex processes Holliday junction (HJ) DNA during genetic recombination and DNA repair, while the RuvA-RuvB complex plays an important role in the rescue of blocked DNA replication forks via replication fork reversal (RFR). RuvA specifically binds to HJ cruciform DNA, conferring on it an open structure. The RuvB hexamer acts as an ATP-dependent pump, pulling dsDNA into and through the RuvAB complex. RuvB forms 2 homohexamers on either side of HJ DNA bound by 1 or 2 RuvA tetramers; 4 subunits per hexamer contact DNA at a time. Coordinated motions by a converter formed by DNA-disengaged RuvB subunits stimulates ATP hydrolysis and nucleotide exchange. Immobilization of the converter enables RuvB to convert the ATP-contained energy into a lever motion, pulling 2 nucleotides of DNA out of the RuvA tetramer per ATP hydrolyzed, thus driving DNA branch migration. The RuvB motors rotate together with the DNA substrate, which together with the progressing nucleotide cycle form the mechanistic basis for DNA recombination by continuous HJ branch migration. Branch migration allows RuvC to scan DNA until it finds its consensus sequence, where it cleaves and resolves cruciform DNA. The sequence is that of Holliday junction branch migration complex subunit RuvB from Granulibacter bethesdensis (strain ATCC BAA-1260 / CGDNIH1).